A 573-amino-acid polypeptide reads, in one-letter code: Leucine aminopeptidase, chloroplastic (573 aa).

The N-terminal 53 residues, 1-53, are a transit peptide targeting the chloroplast; the sequence is MATLRVSSLLASSPSSLHCNPSVFTKCQSSPRWAFSFSVTPLCSRRSKRIVHC. Positions 342 and 347 each coordinate Mn(2+). Residue K354 is part of the active site. Positions 367, 427, and 429 each coordinate Mn(2+). The active site involves R431.

Belongs to the peptidase M17 family. As to quaternary structure, homohexamer (dimer of homotrimers). Mn(2+) is required as a cofactor. In terms of tissue distribution, in tubers and floral buds of untreated plants. After abscisic acid (ABA) treatment or mechanical wounding is mostly accumulated in leaves, to a lesser extent in stems, but not in roots.

Its subcellular location is the plastid. The protein localises to the chloroplast. The enzyme catalyses Release of an N-terminal amino acid, Xaa-|-Yaa-, in which Xaa is preferably Leu, but may be other amino acids including Pro although not Arg or Lys, and Yaa may be Pro. Amino acid amides and methyl esters are also readily hydrolyzed, but rates on arylamides are exceedingly low.. It catalyses the reaction Release of N-terminal proline from a peptide.. Its function is as follows. Presumably involved in the processing and regular turnover of intracellular proteins. The sequence is that of Leucine aminopeptidase, chloroplastic (LAP) from Solanum tuberosum (Potato).